The primary structure comprises 202 residues: FMN-dependent NADH:quinone oxidoreductase (202 aa).

FMN-binding positions include S12 and 21–23 (SFS).

It belongs to the azoreductase type 1 family. In terms of assembly, homodimer. The cofactor is FMN.

It catalyses the reaction 2 a quinone + NADH + H(+) = 2 a 1,4-benzosemiquinone + NAD(+). The enzyme catalyses N,N-dimethyl-1,4-phenylenediamine + anthranilate + 2 NAD(+) = 2-(4-dimethylaminophenyl)diazenylbenzoate + 2 NADH + 2 H(+). Functionally, quinone reductase that provides resistance to thiol-specific stress caused by electrophilic quinones. Its function is as follows. Also exhibits azoreductase activity. Catalyzes the reductive cleavage of the azo bond in aromatic azo compounds to the corresponding amines. This Mycoplasma mobile (strain ATCC 43663 / 163K / NCTC 11711) (Mesomycoplasma mobile) protein is FMN-dependent NADH:quinone oxidoreductase.